The primary structure comprises 582 residues: MNSKQITTLWCAVIVEELIRQEAGFFCISPGSRSTPLTLAVASNPKARFRMFPDERSAGFYALGYARATGMPAVLVCTSGTAVANYFPAVVEASADAQPMLVLSADRPFELLECGANQAIRQQNIFGSYTRWSFELPEPGIATPLASLLSTVDHAVRKSLSLPAGPVHLNLPFREPLEPEAPDPGHPWAAPLETWQASGEPWSRFARPLHEPSAESIVTLRELLAQAERPLFVAGSMSNAADGEAVAALAESLGVPLFADLTSGIRLSSDCTPWQLAFQNEAFVERFQPDVVIHFGGHVIGKQPAMALRKQPPLHYVVVREHPGRFDPDHNVTLTLEASPAAVASALEGCREPVPGIRCRDAFSAASGIIDKMACVPELAVSEISAPRIVSSLAGDGHALFVANSMPARDMDLYAAPVAQKPLQVALNRGVSGIDGIISTAAGFSAGLGKPTTLLIGDISFLHDLNALCLLNHPWNPLIVIVLNNHGGSIFSFLPIASQTDRLDECFATPQNFSIESAARTFGIDYACPETNGDFTQLYAEALTTKKSLIIEIRSDREKNLLLHRSLKARLDPVFEKADCSR.

The protein belongs to the TPP enzyme family. MenD subfamily. Homodimer. Requires Mg(2+) as cofactor. It depends on Mn(2+) as a cofactor. Thiamine diphosphate is required as a cofactor.

It catalyses the reaction isochorismate + 2-oxoglutarate + H(+) = 5-enolpyruvoyl-6-hydroxy-2-succinyl-cyclohex-3-ene-1-carboxylate + CO2. It functions in the pathway quinol/quinone metabolism; 1,4-dihydroxy-2-naphthoate biosynthesis; 1,4-dihydroxy-2-naphthoate from chorismate: step 2/7. It participates in quinol/quinone metabolism; menaquinone biosynthesis. Its function is as follows. Catalyzes the thiamine diphosphate-dependent decarboxylation of 2-oxoglutarate and the subsequent addition of the resulting succinic semialdehyde-thiamine pyrophosphate anion to isochorismate to yield 2-succinyl-5-enolpyruvyl-6-hydroxy-3-cyclohexene-1-carboxylate (SEPHCHC). The polypeptide is 2-succinyl-5-enolpyruvyl-6-hydroxy-3-cyclohexene-1-carboxylate synthase (Chlorobaculum tepidum (strain ATCC 49652 / DSM 12025 / NBRC 103806 / TLS) (Chlorobium tepidum)).